The sequence spans 307 residues: Elongation factor Ts (307 aa).

The involved in Mg(2+) ion dislocation from EF-Tu stretch occupies residues 79 to 82 (TDFV).

It belongs to the EF-Ts family.

The protein localises to the cytoplasm. Associates with the EF-Tu.GDP complex and induces the exchange of GDP to GTP. It remains bound to the aminoacyl-tRNA.EF-Tu.GTP complex up to the GTP hydrolysis stage on the ribosome. The polypeptide is Elongation factor Ts (tsf) (Bartonella quintana (strain Toulouse) (Rochalimaea quintana)).